Reading from the N-terminus, the 183-residue chain is Peptidyl-tRNA hydrolase (183 aa).

Tyr-14 is a tRNA binding site. His-19 (proton acceptor) is an active-site residue. Tyr-60 and Asn-62 together coordinate tRNA.

Belongs to the PTH family. In terms of assembly, monomer.

It is found in the cytoplasm. The catalysed reaction is an N-acyl-L-alpha-aminoacyl-tRNA + H2O = an N-acyl-L-amino acid + a tRNA + H(+). Its function is as follows. Hydrolyzes ribosome-free peptidyl-tRNAs (with 1 or more amino acids incorporated), which drop off the ribosome during protein synthesis, or as a result of ribosome stalling. Functionally, catalyzes the release of premature peptidyl moieties from peptidyl-tRNA molecules trapped in stalled 50S ribosomal subunits, and thus maintains levels of free tRNAs and 50S ribosomes. The sequence is that of Peptidyl-tRNA hydrolase from Mycoplasmoides gallisepticum (strain R(low / passage 15 / clone 2)) (Mycoplasma gallisepticum).